Reading from the N-terminus, the 255-residue chain is Glutamate racemase (255 aa).

Substrate is bound by residues 7-8 (DS) and 39-40 (YG). The active-site Proton donor/acceptor is cysteine 70. 71–72 (NT) is a binding site for substrate. The active-site Proton donor/acceptor is cysteine 181. Position 182–183 (182–183 (TH)) interacts with substrate.

Belongs to the aspartate/glutamate racemases family.

It catalyses the reaction L-glutamate = D-glutamate. Its pathway is cell wall biogenesis; peptidoglycan biosynthesis. Functionally, provides the (R)-glutamate required for cell wall biosynthesis. This Helicobacter pylori (strain G27) protein is Glutamate racemase.